The following is a 349-amino-acid chain: Alanine racemase (349 aa).

Lys35 functions as the Proton acceptor; specific for D-alanine in the catalytic mechanism. Residue Lys35 is modified to N6-(pyridoxal phosphate)lysine. Arg130 contacts substrate. Tyr244 functions as the Proton acceptor; specific for L-alanine in the catalytic mechanism. Met292 serves as a coordination point for substrate.

The protein belongs to the alanine racemase family. Pyridoxal 5'-phosphate is required as a cofactor.

The enzyme catalyses L-alanine = D-alanine. Its pathway is amino-acid biosynthesis; D-alanine biosynthesis; D-alanine from L-alanine: step 1/1. Its function is as follows. Catalyzes the interconversion of L-alanine and D-alanine. May also act on other amino acids. This chain is Alanine racemase (alr), found in Cereibacter sphaeroides (strain KD131 / KCTC 12085) (Rhodobacter sphaeroides).